Here is an 87-residue protein sequence, read N- to C-terminus: Neurotoxin LmNaTx64.1 (87 aa).

The N-terminal stretch at 1 to 18 is a signal peptide; it reads MKILFLIILTAFFIGVHC. An LCN-type CS-alpha/beta domain is found at 19–85; sequence KHGYPIIRAG…TWSRATNKCK (67 aa). 4 cysteine pairs are disulfide-bonded: cysteine 33-cysteine 84, cysteine 37-cysteine 58, cysteine 44-cysteine 65, and cysteine 48-cysteine 67. A Cysteine amide modification is found at cysteine 84.

This sequence belongs to the long (4 C-C) scorpion toxin superfamily. Sodium channel inhibitor family. Beta subfamily. Expressed by the venom gland.

The protein localises to the secreted. Functionally, binds voltage-independently at site-4 of sodium channels (Nav) and shift the voltage of activation toward more negative potentials thereby affecting sodium channel activation and promoting spontaneous and repetitive firing. In Lychas mucronatus (Chinese swimming scorpion), this protein is Neurotoxin LmNaTx64.1.